Here is a 61-residue protein sequence, read N- to C-terminus: UPF0337 protein LMOf2365_2190 (61 aa).

Residues 1-61 form a disordered region; the sequence is MSEDKGMKDK…TGDAKKKLSE (61 aa).

Belongs to the UPF0337 (CsbD) family.

In Listeria monocytogenes serotype 4b (strain F2365), this protein is UPF0337 protein LMOf2365_2190.